We begin with the raw amino-acid sequence, 149 residues long: MKKEKRQRLIKQFVKEYEIDKQERLVELLAKKDVLVTQATVSRDIRELNLTKVPSQEGLMIYKVFSEEHLQTDIKLKKKLREVVVKIDCVDQLMVIKTLPGNAHVIGVLFDELDWKEKIGCICGNDTCLIISQSKSDREIIEERLNLII.

This sequence belongs to the ArgR family.

Its subcellular location is the cytoplasm. The protein operates within amino-acid degradation; L-arginine degradation via ADI pathway. Regulates the transcription of the arc operon, involved in arginine catabolism. This chain is Arginine regulator (argR1), found in Bacillus cereus (strain ATCC 14579 / DSM 31 / CCUG 7414 / JCM 2152 / NBRC 15305 / NCIMB 9373 / NCTC 2599 / NRRL B-3711).